The chain runs to 753 residues: A-kinase anchor protein 200 (753 aa).

Disordered regions lie at residues 1-345, 462-482, 531-604, 620-641, and 658-684; these read MGKA…QIEA, VETR…PSRV, TEQE…IDPA, VEKE…SDEQ, and VEET…DKEN. A lipid anchor (N-myristoyl glycine) is attached at G2. Basic and acidic residues-rich tracts occupy residues 8-38 and 59-77; these read RSID…DQKT and AVEK…DLTT. Residues 81–93 show a composition bias toward low complexity; the sequence is AAVAEGGDAVAET. Residues 119–148 form an F-actin binding region; that stretch reads KSKSKKDKVKKKWSFRSISFGKKDKQKPAK. The segment covering 120–132 has biased composition (basic residues); the sequence is SKSKKDKVKKKWS. A phosphoserine mark is found at S132, S135, and S137. The segment covering 139–151 has biased composition (basic and acidic residues); the sequence is GKKDKQKPAKSEE. Low complexity predominate over residues 152–181; sequence ATSPTSGTTSPTTAEAEAAPAGDAAVAEPS. Over residues 216–227 the composition is skewed to basic and acidic residues; the sequence is EQEKQANGETEK. Residues 246–262 are compositionally biased toward low complexity; it reads EPATVTATESNTTATEE. The interval 345 to 725 is interaction with PKA-R2; the sequence is ASSEVIETVT…AEQEGESNNK (381 aa). The segment covering 468–480 has biased composition (pro residues); that stretch reads SPPPPLPKSPPPS. Residues 532 to 544 are compositionally biased toward basic and acidic residues; sequence EQEKQQEEAKVDS. Low complexity predominate over residues 545–561; the sequence is VPETIEESSSTVVVEEV. The span at 578–594 shows a compositional bias: basic and acidic residues; sequence DVQKPIEDQDTPDEKES. A compositionally biased stretch (low complexity) spans 626–638; it reads SISSNVAESSSVS. Residues 674 to 684 are compositionally biased toward basic and acidic residues; it reads EEAHSDNDKEN.

Homodimer. Interacts with Cam; interaction is calcium-dependent and is inhibited by PKC-mediated phosphorylation of Akap200. Interacts with N/Notch; the interaction stabilizes N/Notch protein levels by preventing Cbl-mediated ubiquitination and subsequent lysosomal degradation of N/Notch. Interacts with Pka-R2. Binds to F-actin; interaction is independent of myristoylation, but is inhibited by Akap200 phosphorylation and Cam binding. Isoform B: Does not bind to Pka-R2. Myristoylated; myristoylation promotes accumulation at the cell periphery. In terms of processing, phosphorylated; phosphorylation prevents binding to F-actin and Cam. In terms of tissue distribution, detected in the brain in both neurons and glia (including perineurial glia); specifically in the neuronal nuclei in the cortex and synaptic neuropil (at protein level). Detected in germline cells, somatic follicle cells and outer rim of the ring canals during oogenesis (at protein level). Isoform A: Detected in the adult (at protein level). Isoform B: Detected in the adult with higher levels in the head (at protein level).

The protein localises to the cytoplasm. It localises to the cytosol. Its subcellular location is the cell membrane. The protein resides in the cytoskeleton. In terms of biological role, scaffolding protein involved in the regulation of PKA signaling and anchoring to the actin cytoskeleton integrating signals propagated by cAMP, diacylglycerol and calcium. Contributes to the maintenance and regulation of cytoskeletal structures in germline via PKA-mediated signaling. As part of ethanol response in the glia, mediates ethanol-induced structural remodeling of actin cytoskeleton and perineurial membrane topology by anchoring PKA to the membrane of perineurial glia. In specific tissues such as eye and thorax, promotes N/Notch protein stability by inhibiting Cbl-mediated ubiquitination and lysosomal degradation pathway of N/Notch in a PKA-independent way. In the circadian brain neurons evening cells (E-cells), might have a role in circadian pacemaker synchronization by playing a redundant role in signaling downstream of the G protein-couple receptor Pdfr. The sequence is that of A-kinase anchor protein 200 from Drosophila melanogaster (Fruit fly).